Reading from the N-terminus, the 486-residue chain is mRNA cap guanine-N(7) methyltransferase (486 aa).

Residues 1–92 (MAGGADLDEP…ADRKAARERA (92 aa)) are disordered. Composition is skewed to basic and acidic residues over residues 9-28 (EPPRQSDSTTDRKRPADSTH), 35-54 (VPRDRAGNKTYDISKLEPAR), and 82-92 (EADRKAARERA). Positions 135–486 (SRIKGLRSFN…FYVGFCFYKV (352 aa)) constitute an mRNA cap 0 methyltransferase domain. 144–145 (NN) contributes to the mRNA binding site. S-adenosyl-L-methionine contacts are provided by residues K148, G177, D201, D247, 281–283 (MFC), and Y286. The span at 333 to 351 (VEMKKKQAEAGDGSKKDDG) shows a compositional bias: basic and acidic residues. Positions 333-365 (VEMKKKQAEAGDGSKKDDGGDAEEGELDEPEVE) are disordered. The span at 352–363 (GDAEEGELDEPE) shows a compositional bias: acidic residues.

This sequence belongs to the class I-like SAM-binding methyltransferase superfamily. mRNA cap 0 methyltransferase family.

It localises to the nucleus. The catalysed reaction is a 5'-end (5'-triphosphoguanosine)-ribonucleoside in mRNA + S-adenosyl-L-methionine = a 5'-end (N(7)-methyl 5'-triphosphoguanosine)-ribonucleoside in mRNA + S-adenosyl-L-homocysteine. Its function is as follows. Responsible for methylating the 5'-cap structure of mRNAs. This is mRNA cap guanine-N(7) methyltransferase (ABD1) from Pyricularia oryzae (strain 70-15 / ATCC MYA-4617 / FGSC 8958) (Rice blast fungus).